The chain runs to 104 residues: Thioredoxin-2 (104 aa).

A Thioredoxin domain is found at 2 to 104 (VTQLKSASEY…AIKQAIASNV (103 aa)). Residues cysteine 31 and cysteine 34 each act as nucleophile in the active site. An intrachain disulfide couples cysteine 31 to cysteine 34. Serine 62 carries the phosphoserine modification. Glycyl lysine isopeptide (Lys-Gly) (interchain with G-Cter in ubiquitin) cross-links involve residues lysine 67 and lysine 97.

The protein belongs to the thioredoxin family. Monomer. Part of the heterodimeric LMA1 complex together with the proteinase inhibitor PBI2. LMA1 binds to the ATPase SEC18. Post-translationally, reversible disulfide bond formation between Cys-31 and Cys-34, reverted by thioredoxin reductase TRR1 using NADPH as hydrogen donor.

It is found in the cytoplasm. The protein resides in the golgi apparatus membrane. It localises to the nucleus. Functionally, participates as a hydrogen donor in redox reactions through the reversible oxidation of its active center dithiol to a disulfide, accompanied by the transfer of 2 electrons and 2 protons. It is involved in many cellular processes, including deoxyribonucleotide synthesis, repair of oxidatively damaged proteins, protein folding, sulfur metabolism, and redox homeostasis. Thioredoxin-dependent enzymes include phosphoadenosine-phosphosulfate reductase MET16, alkyl-hydroperoxide reductase DOT5, thioredoxin peroxidases TSA1 and TSA2, alkyl hydroperoxide reductase AHP1, and peroxiredoxin HYR1. Thioredoxin is also involved in protection against reducing stress. As part of the LMA1 complex, it is involved in the facilitation of vesicle fusion such as homotypic vacuole and ER-derived COPII vesicle fusion with the Golgi. This activity does not require the redox mechanism. Through its capacity to inactivate the stress response transcription factor YAP1 and its regulator the hydroperoxide stress sensor HYR1, it is involved in feedback regulation of stress response gene expression upon oxidative stress. The protein is Thioredoxin-2 (TRX2) of Saccharomyces cerevisiae (strain ATCC 204508 / S288c) (Baker's yeast).